Consider the following 273-residue polypeptide: Protein FAM210A (273 aa).

A disordered region spans residues 94–116 (RVLSSSSTSQETPSEKKEETDPL). Residues 106-116 (PSEKKEETDPL) show a composition bias toward basic and acidic residues. The region spanning 118–230 (DKSISLYQRF…GYMSTPPPVK (113 aa)) is the DUF1279 domain. Residues 138–158 (LIPVHLITSGIWFGTFYYATI) form a helical membrane-spanning segment. Residues 233–269 (LQGRMEETKELITEKMEETKDRLTEKLQETKGKVSFK) are a coiled coil.

It belongs to the FAM210 family. As to quaternary structure, interacts with ATAD3A. Expressed in skeletal muscle, heart, brain but not in bone.

It localises to the membrane. The protein localises to the mitochondrion. The protein resides in the cytoplasm. May play a role in the structure and strength of both muscle and bone. The polypeptide is Protein FAM210A (Fam210a) (Mus musculus (Mouse)).